A 267-amino-acid polypeptide reads, in one-letter code: Mlc titration factor A (267 aa).

Residues H111, H148, H152, and E211 each contribute to the Zn(2+) site.

It belongs to the MtfA family. Interacts with Mlc. The cofactor is Zn(2+).

It localises to the cytoplasm. Involved in the modulation of the activity of the glucose-phosphotransferase system (glucose-PTS). Interacts with the transcriptional repressor Mlc, preventing its interaction with DNA and leading to the modulation of expression of genes regulated by Mlc, including ptsG, which encodes the PTS system glucose-specific EIICB component. Functionally, shows zinc-dependent metallopeptidase activity. The chain is Mlc titration factor A from Yersinia enterocolitica serotype O:8 / biotype 1B (strain NCTC 13174 / 8081).